The primary structure comprises 228 residues: ATP-dependent dethiobiotin synthetase BioD (228 aa).

Position 12 to 17 (12 to 17) interacts with ATP; it reads EIGKTT. Thr16 provides a ligand contact to Mg(2+). Residue Lys37 is part of the active site. Ser41 is a substrate binding site. ATP-binding positions include Asp54, 116–119, and 205–207; these read EGAG and PRL. 2 residues coordinate Mg(2+): Asp54 and Glu116.

The protein belongs to the dethiobiotin synthetase family. As to quaternary structure, homodimer. Mg(2+) is required as a cofactor.

The protein resides in the cytoplasm. The catalysed reaction is (7R,8S)-7,8-diammoniononanoate + CO2 + ATP = (4R,5S)-dethiobiotin + ADP + phosphate + 3 H(+). It participates in cofactor biosynthesis; biotin biosynthesis; biotin from 7,8-diaminononanoate: step 1/2. Functionally, catalyzes a mechanistically unusual reaction, the ATP-dependent insertion of CO2 between the N7 and N8 nitrogen atoms of 7,8-diaminopelargonic acid (DAPA, also called 7,8-diammoniononanoate) to form a ureido ring. The chain is ATP-dependent dethiobiotin synthetase BioD from Pseudomonas aeruginosa (strain LESB58).